The primary structure comprises 634 residues: NRPS-independent siderophore synthetase rfs (634 aa).

Functionally, NRPS-independent siderophore synthetase that catalyzes the rhizoferrin biosynthesis from citrate and diaminobutane via an ATP-dependent condensation of citrate with diaminobutane followed by the addition of a second citrate to the monocitryl-diaminobutane intermediate. Can also use as substrates the citrate and diaminobutane homologs oxaloacetic acid, diaminopropane, diaminobutane, diaminopentane, tricarballylic acid, hydroxylamine and ornithine. Forms only a mono-substituted intermediate with oxaloacetic acid and diaminopentane whereas both mono-citryl intermediates and full rhizoferrin derivatives were detected when diaminopropane, and ornithine were used as substrates. Tricarballylic acid only forms a rhizoferrin derivative, but no mono-substituted intermediate. The protein is NRPS-independent siderophore synthetase rfs of Rhizopus delemar (strain RA 99-880 / ATCC MYA-4621 / FGSC 9543 / NRRL 43880) (Mucormycosis agent).